Here is a 348-residue protein sequence, read N- to C-terminus: Ubiquitin thioesterase OTU1 (348 aa).

The segment covering 1 to 11 (MFGPAKGRHFG) has biased composition (basic residues). The disordered stretch occupies residues 1-39 (MFGPAKGRHFGVHPAPGFPGGVSQQAAGTKAGPAGAWPV). The UBX-like stretch occupies residues 50 to 128 (RCKAKDGTHV…IIEEDQTRPR (79 aa)). An OTU domain is found at 149–274 (LTRTVVPADN…GIHYDPLQRN (126 aa)). Residues 154 to 160 (VPADNSC) are cys-loop. The active site involves D157. The active-site Nucleophile is C160. A variable-loop region spans residues 213–223 (IKRDDTWGGAI). Residues 263-267 (YDGIH) are his-loop. Substrate is bound at residue I266. The active site involves H267. Residues 291 to 296 (DIVLVQ) are S2 site. The C2H2-type zinc finger occupies 318–342 (LRCMVCQKGLTGQAEAREHAKETGH). H342 is an active-site residue.

Interacts with VCP; the interaction is direct. Interacts with FAF2/UBXD8. Interacts with DERL1; however interaction is dependent on the UBAX-like region, suggesting that it may be indirect. Interacts with PLAA, UBXN6 and VCP; may form a complex involved in macroautophagy.

It is found in the cytoplasm. It catalyses the reaction Thiol-dependent hydrolysis of ester, thioester, amide, peptide and isopeptide bonds formed by the C-terminal Gly of ubiquitin (a 76-residue protein attached to proteins as an intracellular targeting signal).. Functionally, hydrolase that can remove conjugated ubiquitin from proteins and participates in endoplasmic reticulum-associated degradation (ERAD) for misfolded lumenal proteins. May act by triming the ubiquitin chain on the associated substrate to facilitate their threading through the VCP/p97 pore. Ubiquitin moieties on substrates may present a steric impediment to the threading process when the substrate is transferred to the VCP pore and threaded through VCP's axial channel. Mediates deubiquitination of 'Lys-27'-, 'Lys-29'- and 'Lys-33'-linked polyubiquitin chains. Also able to hydrolyze 'Lys-11'-linked ubiquitin chains. Cleaves both polyubiquitin and di-ubiquitin. May play a role in macroautophagy, regulating for instance the clearance of damaged lysosomes. May recruit PLAA, UBXN6 and VCP to damaged lysosome membranes decorated with K48-linked ubiquitin chains and remove these chains allowing autophagosome formation. This Homo sapiens (Human) protein is Ubiquitin thioesterase OTU1 (YOD1).